The sequence spans 731 residues: Radial spoke head 10 homolog B (731 aa).

The disordered stretch occupies residues 1–69; sequence MARGDNMKSS…PNENQPIGEH (69 aa). The segment covering 7-17 has biased composition (polar residues); sequence MKSSNKSTPEP. Low complexity-rich tracts occupy residues 18-36 and 46-57; these read TLSKTLVESSTSSLLSESV and SSSAVCSASTVS. 10 MORN repeats span residues 86–108, 109–131, 132–154, 155–177, 179–201, 204–226, 227–249, 251–273, 284–306, and 307–329; these read YEGEKCGEMFHGEGVAYFQGGHV, YKGSFSHGLMHGYGEYIWSDGLK, YQGDFKVNVPMGHGTYTWLNGST, YEGEVHQGIRHGVGMYKCVKTLT, YRGQWYLGKRQGQGEMFYNQEAT, YKGEWVNNCREGWGKRCYPSGNV, YEGQWRNNVRHGEGTMRWIDLDQ, YSGQWINGIQEGKGTHTWFRKRA, YTGDFVQAMRHGQGQFLYASGAL, and YCGQWKYDKKHGQGRYIFENGRV. Disordered regions lie at residues 353–377 and 709–731; these read TTPFPDENDSSKGASQSSSNASPLG and KQEQDADGNELCPVTTTSVTSIH. Positions 363-377 are enriched in low complexity; sequence SKGASQSSSNASPLG. Over residues 722–731 the composition is skewed to polar residues; the sequence is VTTTSVTSIH.

It localises to the cytoplasm. The protein resides in the cytoskeleton. It is found in the cilium axoneme. The protein localises to the cell projection. Its subcellular location is the cilium. It localises to the flagellum. In terms of biological role, may function as part of axonemal radial spoke complexes. Radial spoke complexes are important for ciliary motility. The polypeptide is Radial spoke head 10 homolog B (rsph10b) (Danio rerio (Zebrafish)).